A 471-amino-acid chain; its full sequence is Glutamate--tRNA ligase (471 aa).

Positions 9 to 19 (PSPTGYLHVGG) match the 'HIGH' region motif. Zn(2+) is bound by residues Cys98, Cys100, Cys125, and His127. The short motif at 237–241 (KLSKR) is the 'KMSKS' region element. Lys240 is an ATP binding site.

This sequence belongs to the class-I aminoacyl-tRNA synthetase family. Glutamate--tRNA ligase type 1 subfamily. In terms of assembly, monomer. Requires Zn(2+) as cofactor.

The protein localises to the cytoplasm. The catalysed reaction is tRNA(Glu) + L-glutamate + ATP = L-glutamyl-tRNA(Glu) + AMP + diphosphate. Its function is as follows. Catalyzes the attachment of glutamate to tRNA(Glu) in a two-step reaction: glutamate is first activated by ATP to form Glu-AMP and then transferred to the acceptor end of tRNA(Glu). This Salmonella gallinarum (strain 287/91 / NCTC 13346) protein is Glutamate--tRNA ligase.